Consider the following 320-residue polypeptide: Malate dehydrogenase (320 aa).

NAD(+)-binding positions include 8 to 13 (GAGQIG) and Asp33. The substrate site is built by Arg82 and Arg88. NAD(+) contacts are provided by residues Asn95 and 118-120 (ITN). The substrate site is built by Asn120 and Arg151. Catalysis depends on His175, which acts as the Proton acceptor.

Belongs to the LDH/MDH superfamily. MDH type 3 family.

It catalyses the reaction (S)-malate + NAD(+) = oxaloacetate + NADH + H(+). Catalyzes the reversible oxidation of malate to oxaloacetate. The chain is Malate dehydrogenase from Pelagibacter ubique (strain HTCC1062).